The following is a 605-amino-acid chain: Capsid scaffolding protein (605 aa).

Active-site charge relay system residues include His-48, Ser-116, and His-139. The disordered stretch occupies residues 235–274 (ASDAPDLQKPDKALQSPPPASTDPATMLSGNAGEGATACG). Positions 281 to 300 (QDLISVPRNTFMTLLQTNLD) are interaction with pAP. Disordered stretches follow at residues 403-431 (DYVP…FPGE) and 489-588 (PHQS…KSVS). The Nuclear localization signal motif lies at 410 to 416 (RSNKRKR). Residues 568–579 (ASASGVAQSKEP) show a composition bias toward polar residues. An interaction with major capsid protein region spans residues 585–605 (KSVSAHLKSIFCEELLNKRVA).

This sequence belongs to the herpesviridae capsid scaffolding protein family. As to quaternary structure, homomultimer. Interacts with major capsid protein. In terms of assembly, exists in a monomer-dimer equilibrium with the dimer being the active species. In terms of processing, capsid scaffolding protein is cleaved by assemblin after formation of the spherical procapsid. As a result, the capsid obtains its mature, icosahedral shape. Cleavages occur at two or more sites: release (R-site) and maturation (M-site).

The protein resides in the host cytoplasm. It is found in the host nucleus. The enzyme catalyses Cleaves -Ala-|-Ser- and -Ala-|-Ala- bonds in the scaffold protein.. In terms of biological role, acts as a scaffold protein by binding major capsid protein in the cytoplasm, inducing the nuclear localization of both proteins. Multimerizes in the nucleus such as major capsid protein forms the icosahedral T=16 capsid. Autocatalytic cleavage releases the assembly protein, and subsequently abolishes interaction with major capsid protein. Cleavages products are evicted from the capsid before or during DNA packaging. Functionally, protease that plays an essential role in virion assembly within the nucleus. Catalyzes the cleavage of the assembly protein after formation of the spherical procapsid. By that cleavage, the capsid matures and gains its icosahedral shape. The cleavage sites seem to include -Ala-Ser-, -Ala-Ala-, as well as Ala-Thr bonds. Assemblin and cleavages products are evicted from the capsid before or during DNA packaging. Its function is as follows. Plays a major role in capsid assembly. Acts as a scaffold protein by binding major capsid protein. Multimerizes in the nucleus such as major capsid protein forms the icosahedral T=16 capsid. Cleaved by assemblin after capsid completion. The cleavages products are evicted from the capsid before or during DNA packaging. This Homo sapiens (Human) protein is Capsid scaffolding protein.